A 665-amino-acid chain; its full sequence is Probable arginine--tRNA ligase, cytoplasmic (665 aa).

Residues S204–N206, H215, Y390, D394, and Q418 contribute to the L-arginine site. Positions P205–L216 match the 'HIGH' region motif. An interaction with tRNA region spans residues N535 to S549.

Belongs to the class-I aminoacyl-tRNA synthetase family.

The protein resides in the cytoplasm. It localises to the cytosol. It catalyses the reaction tRNA(Arg) + L-arginine + ATP = L-arginyl-tRNA(Arg) + AMP + diphosphate. Its function is as follows. Forms part of a macromolecular complex that catalyzes the attachment of specific amino acids to cognate tRNAs during protein synthesis. This chain is Probable arginine--tRNA ligase, cytoplasmic, found in Drosophila melanogaster (Fruit fly).